Here is a 279-residue protein sequence, read N- to C-terminus: Lipid phosphate phosphatase epsilon 1, chloroplastic (279 aa).

The transit peptide at 1-88 directs the protein to the chloroplast; the sequence is MAASSSLLLL…SFINNSSEIR (88 aa). 5 helical membrane-spanning segments follow: residues 126-142, 164-184, 185-205, 219-239, and 255-275; these read LWAV…SVVL, SHAQ…MEWL, GTNG…SYFI, VVVG…MWNS, and VFLF…LNWF.

It belongs to the PA-phosphatase related phosphoesterase family. As to expression, expressed in root tips, root branch points, cotyledons and leaves.

The protein localises to the plastid. It localises to the chloroplast inner membrane. With respect to regulation, inhibited by Mg(2+). Exhibits phosphatidate phosphatase (PAP) activity in vitro. May play a secondary role as PAP in plastids. The sequence is that of Lipid phosphate phosphatase epsilon 1, chloroplastic (LPPE1) from Arabidopsis thaliana (Mouse-ear cress).